The primary structure comprises 286 residues: Pyridoxal kinase PdxY (286 aa).

Substrate contacts are provided by residues Ser-9 and 44–45 (TQ). ATP is bound by residues Asp-111, Glu-148, and Lys-181. Residue Asp-222 participates in substrate binding.

The protein belongs to the pyridoxine kinase family. PdxY subfamily. As to quaternary structure, homodimer. It depends on Mg(2+) as a cofactor.

It carries out the reaction pyridoxal + ATP = pyridoxal 5'-phosphate + ADP + H(+). It participates in cofactor metabolism; pyridoxal 5'-phosphate salvage; pyridoxal 5'-phosphate from pyridoxal: step 1/1. Pyridoxal kinase involved in the salvage pathway of pyridoxal 5'-phosphate (PLP). Catalyzes the phosphorylation of pyridoxal to PLP. The chain is Pyridoxal kinase PdxY from Actinobacillus succinogenes (strain ATCC 55618 / DSM 22257 / CCUG 43843 / 130Z).